A 169-amino-acid chain; its full sequence is Ribosome maturation factor RimM (169 aa).

Positions 94–167 (ENEFYFHEII…KITIEVMEGL (74 aa)) constitute a PRC barrel domain.

The protein belongs to the RimM family. In terms of assembly, binds ribosomal protein uS19.

The protein resides in the cytoplasm. Its function is as follows. An accessory protein needed during the final step in the assembly of 30S ribosomal subunit, possibly for assembly of the head region. Essential for efficient processing of 16S rRNA. May be needed both before and after RbfA during the maturation of 16S rRNA. It has affinity for free ribosomal 30S subunits but not for 70S ribosomes. This chain is Ribosome maturation factor RimM, found in Listeria welshimeri serovar 6b (strain ATCC 35897 / DSM 20650 / CCUG 15529 / CIP 8149 / NCTC 11857 / SLCC 5334 / V8).